A 62-amino-acid chain; its full sequence is uncharacterized protein (62 aa).

It localises to the plastid. Its subcellular location is the chloroplast. This is an uncharacterized protein from Porphyra purpurea (Red seaweed).